The chain runs to 406 residues: Heparan sulfate glucosamine 3-O-sulfotransferase 3A1 (406 aa).

The Cytoplasmic portion of the chain corresponds to 1 to 24; it reads MAPPGPASALSTSAEPLSRSIFRK. Residues 25–43 traverse the membrane as a helical; Signal-anchor for type II membrane protein segment; the sequence is FLLMLCSLLTSLYVFYCLA. Residues 44–406 lie on the Lumenal side of the membrane; it reads ERCQTLSGPV…MTGHDFGWDG (363 aa). Positions 92 to 102 are enriched in basic residues; it reads QLPQWRRRRPP. The segment at 92 to 134 is disordered; it reads QLPQWRRRRPPAPRDDGEEAAWEEESPGLSGGPGGSGAGSTVA. Residues 107-117 are compositionally biased toward acidic residues; it reads DGEEAAWEEES. Residues 120-129 are compositionally biased toward gly residues; sequence LSGGPGGSGA. 162–166 provides a ligand contact to 3'-phosphoadenylyl sulfate; it reads KGGTR. Residues Arg166, 184–190, and 215–218 each bind substrate; these read EPHFFDR and KTPS. 2 residues coordinate 3'-phosphoadenylyl sulfate: Arg243 and Ser251. 255–259 contacts substrate; it reads QTLSK. N-linked (GlcNAc...) asparagine glycosylation is present at Asn273. 283–284 provides a ligand contact to substrate; sequence WS. The N-linked (GlcNAc...) asparagine glycan is linked to Asn344. The cysteines at positions 351 and 363 are disulfide-linked. 367-370 is a substrate binding site; sequence TKGR. 368–372 serves as a coordination point for 3'-phosphoadenylyl sulfate; it reads KGRTH.

Belongs to the sulfotransferase 1 family. In terms of tissue distribution, ubiquitous. Most abundant in heart and placenta, followed by liver and kidney.

It is found in the golgi apparatus membrane. The catalysed reaction is alpha-D-glucosaminyl-[heparan sulfate](n) + 3'-phosphoadenylyl sulfate = 3-sulfo-alpha-D-glucosaminyl-[heparan sulfate](n) + adenosine 3',5'-bisphosphate + H(+). Its function is as follows. Sulfotransferase that utilizes 3'-phospho-5'-adenylyl sulfate (PAPS) to catalyze the transfer of a sulfo group to an N-unsubstituted glucosamine linked to a 2-O-sulfo iduronic acid unit on heparan sulfate. Catalyzes the O-sulfation of glucosamine in IdoUA2S-GlcNS and also in IdoUA2S-GlcNH2. The substrate-specific O-sulfation generates an enzyme-modified heparan sulfate which acts as a binding receptor to Herpes simplex virus-1 (HSV-1) and permits its entry. Unlike HS3ST1/3-OST-1, does not convert non-anticoagulant heparan sulfate to anticoagulant heparan sulfate. This is Heparan sulfate glucosamine 3-O-sulfotransferase 3A1 (HS3ST3A1) from Homo sapiens (Human).